The chain runs to 431 residues: 3-isopropylmalate dehydratase large subunit (431 aa).

Positions 308, 368, and 371 each coordinate [4Fe-4S] cluster.

It belongs to the aconitase/IPM isomerase family. LeuC type 2 subfamily. As to quaternary structure, heterodimer of LeuC and LeuD. Requires [4Fe-4S] cluster as cofactor.

It catalyses the reaction (2R,3S)-3-isopropylmalate = (2S)-2-isopropylmalate. It participates in amino-acid biosynthesis; L-leucine biosynthesis; L-leucine from 3-methyl-2-oxobutanoate: step 2/4. Functionally, catalyzes the isomerization between 2-isopropylmalate and 3-isopropylmalate, via the formation of 2-isopropylmaleate. This Desulfosudis oleivorans (strain DSM 6200 / JCM 39069 / Hxd3) (Desulfococcus oleovorans) protein is 3-isopropylmalate dehydratase large subunit.